The following is a 455-amino-acid chain: Lysine histidine transporter-like 4 (455 aa).

At 1–38 (MAGIPDHIQDQHLVEEDQPFDLEDWLPITASRNANWYY) the chain is on the cytoplasmic side. Residues 39-59 (SAFHNVTAIVGAGVLGLPYAM) form a helical membrane-spanning segment. The Extracellular portion of the chain corresponds to 60–61 (SE). A helical membrane pass occupies residues 62 to 82 (LGWGPGVVVLILSWVITLYTL). Residues 83 to 113 (WQMIEMHEMFEGQRFDRYHELGQAAFGKKLG) are Cytoplasmic-facing. The helical transmembrane segment at 114–134 (LYIIVPLQLLVEISVCIVYMV) threads the bilayer. Residues 135–158 (TGGKSLKNVHDLALGDGDKCTKLR) lie on the Extracellular side of the membrane. Residues 159 to 179 (IQHFILIFASSQFVLSLLKNF) traverse the membrane as a helical segment. The Cytoplasmic portion of the chain corresponds to 180–181 (NS). Residues 182-202 (ISGVSLVAAVMSVSYSTIAWV) form a helical membrane-spanning segment. Residues 203 to 226 (ASLRKGATTGSVEYGYRKRTTSVP) lie on the Extracellular side of the membrane. Residues 227 to 247 (LAFLSALGEMAFAYAGHNVVL) form a helical membrane-spanning segment. Residues 248-267 (EIQATIPSTPENPSKRPMWK) lie on the Cytoplasmic side of the membrane. The chain crosses the membrane as a helical span at residues 268-288 (GAVVAYIIVAFCYFPVALVGF). The Extracellular portion of the chain corresponds to 289 to 307 (KTFGNSVEESILESLTKPT). A helical transmembrane segment spans residues 308 to 328 (ALVIVANMFVVIHLLGSYQVY). Residues 329–357 (AMPVFDMIESVMIRIWHFSPTRVLRFTIR) are Cytoplasmic-facing. A helical transmembrane segment spans residues 358–378 (WTFVAATMGIAVGLPYYSALL). Residue Ser-379 is a topological domain, extracellular. A helical transmembrane segment spans residues 380 to 400 (FFGGFVFAPTTYFIPCIMWLI). Residues 401–412 (LKKPKRFSLSWC) are Cytoplasmic-facing. Residues 413–433 (MNWFCIIFGLVLMIIAPIGGL) traverse the membrane as a helical segment. Residues 434–455 (AKLIYNIQKGTLPNSRCNLPKH) lie on the Extracellular side of the membrane.

It belongs to the amino acid/polyamine transporter 2 family. Amino acid/auxin permease (AAAP) (TC 2.A.18.2) subfamily.

The protein localises to the cell membrane. Amino acid transporter. The chain is Lysine histidine transporter-like 4 from Arabidopsis thaliana (Mouse-ear cress).